Here is a 255-residue protein sequence, read N- to C-terminus: MEAGGAYNPRTVEEVFRDFKGRRAGMIKALTTDVQEFFRLCDPEKENLCLYGHPNEHWEVNLPAEEVPPELPEPVLGINFARDGMAEKDWLSLVAVHSDAWLLAVAFFFGARFGFDKADRKRLFNMVNDLPTIFEVVAGTAKKQGKDKSSVSNNSSNRSKSSSKRGSESRAKFSKPEPKDDEEEEEEGVEEEDEDEQGETQCGACGESYAADEFWICCDLCEMWFHGKCVKITPARAEHIKQYKCPSCSNKRARS.

Position 1 is an N-acetylmethionine (methionine 1). Residues 145–200 (GKDKSSVSNNSSNRSKSSSKRGSESRAKFSKPEPKDDEEEEEEGVEEEDEDEQGET) form a disordered region. The segment covering 150-160 (SVSNNSSNRSK) has biased composition (low complexity). Over residues 165–178 (RGSESRAKFSKPEP) the composition is skewed to basic and acidic residues. Positions 179–198 (KDDEEEEEEGVEEEDEDEQG) are enriched in acidic residues. The segment at 199 to 251 (ETQCGACGESYAADEFWICCDLCEMWFHGKCVKITPARAEHIKQYKCPSCSNK) adopts a PHD-type zinc-finger fold.

It belongs to the Alfin family. As to quaternary structure, interacts with H3K4me3 and to a lesser extent with H3K4me2. In terms of tissue distribution, ubiquitously expressed.

It localises to the nucleus. Its function is as follows. Histone-binding component that specifically recognizes H3 tails trimethylated on 'Lys-4' (H3K4me3), which mark transcription start sites of virtually all active genes. The protein is PHD finger protein ALFIN-LIKE 4 (AL4) of Arabidopsis thaliana (Mouse-ear cress).